A 413-amino-acid polypeptide reads, in one-letter code: NADH-quinone oxidoreductase subunit D (413 aa).

It belongs to the complex I 49 kDa subunit family. In terms of assembly, NDH-1 is composed of 14 different subunits. Subunits NuoB, C, D, E, F, and G constitute the peripheral sector of the complex.

The protein localises to the cell inner membrane. The catalysed reaction is a quinone + NADH + 5 H(+)(in) = a quinol + NAD(+) + 4 H(+)(out). Its function is as follows. NDH-1 shuttles electrons from NADH, via FMN and iron-sulfur (Fe-S) centers, to quinones in the respiratory chain. The immediate electron acceptor for the enzyme in this species is believed to be ubiquinone. Couples the redox reaction to proton translocation (for every two electrons transferred, four hydrogen ions are translocated across the cytoplasmic membrane), and thus conserves the redox energy in a proton gradient. This chain is NADH-quinone oxidoreductase subunit D, found in Rhodobacter capsulatus (Rhodopseudomonas capsulata).